The chain runs to 227 residues: Cytochrome c oxidase subunit 2 (227 aa).

Residues 1–14 are Mitochondrial intermembrane-facing; that stretch reads MAHPFQTGLQDATS. Residues 15-45 traverse the membrane as a helical segment; sequence PIMEELLHFHDHTLMIVFLISSLVLYIISIM. The Mitochondrial matrix segment spans residues 46-59; sequence LTTKLTHTNTMDAQ. Residues 60–87 traverse the membrane as a helical segment; that stretch reads EVETVWTILPAIILIMIALPSLRILYMM. Residues 88 to 227 lie on the Mitochondrial intermembrane side of the membrane; it reads DEINNPSLTV…YFEKWSASML (140 aa). H161, C196, E198, C200, H204, and M207 together coordinate Cu cation. A Mg(2+)-binding site is contributed by E198. Phosphotyrosine is present on Y218.

It belongs to the cytochrome c oxidase subunit 2 family. As to quaternary structure, component of the cytochrome c oxidase (complex IV, CIV), a multisubunit enzyme composed of 14 subunits. The complex is composed of a catalytic core of 3 subunits MT-CO1, MT-CO2 and MT-CO3, encoded in the mitochondrial DNA, and 11 supernumerary subunits COX4I, COX5A, COX5B, COX6A, COX6B, COX6C, COX7A, COX7B, COX7C, COX8 and NDUFA4, which are encoded in the nuclear genome. The complex exists as a monomer or a dimer and forms supercomplexes (SCs) in the inner mitochondrial membrane with NADH-ubiquinone oxidoreductase (complex I, CI) and ubiquinol-cytochrome c oxidoreductase (cytochrome b-c1 complex, complex III, CIII), resulting in different assemblies (supercomplex SCI(1)III(2)IV(1) and megacomplex MCI(2)III(2)IV(2)). Found in a complex with TMEM177, COA6, COX18, COX20, SCO1 and SCO2. Interacts with TMEM177 in a COX20-dependent manner. Interacts with COX20. Interacts with COX16. Cu cation serves as cofactor.

Its subcellular location is the mitochondrion inner membrane. It carries out the reaction 4 Fe(II)-[cytochrome c] + O2 + 8 H(+)(in) = 4 Fe(III)-[cytochrome c] + 2 H2O + 4 H(+)(out). Component of the cytochrome c oxidase, the last enzyme in the mitochondrial electron transport chain which drives oxidative phosphorylation. The respiratory chain contains 3 multisubunit complexes succinate dehydrogenase (complex II, CII), ubiquinol-cytochrome c oxidoreductase (cytochrome b-c1 complex, complex III, CIII) and cytochrome c oxidase (complex IV, CIV), that cooperate to transfer electrons derived from NADH and succinate to molecular oxygen, creating an electrochemical gradient over the inner membrane that drives transmembrane transport and the ATP synthase. Cytochrome c oxidase is the component of the respiratory chain that catalyzes the reduction of oxygen to water. Electrons originating from reduced cytochrome c in the intermembrane space (IMS) are transferred via the dinuclear copper A center (CU(A)) of subunit 2 and heme A of subunit 1 to the active site in subunit 1, a binuclear center (BNC) formed by heme A3 and copper B (CU(B)). The BNC reduces molecular oxygen to 2 water molecules using 4 electrons from cytochrome c in the IMS and 4 protons from the mitochondrial matrix. In Ailuropoda melanoleuca (Giant panda), this protein is Cytochrome c oxidase subunit 2 (MT-CO2).